The chain runs to 74 residues: Mitochondrial import receptor subunit TOM6 homolog (74 aa).

The segment covering 1–16 has biased composition (polar residues); it reads MASSTVPVSAAGSANE. The tract at residues 1-22 is disordered; sequence MASSTVPVSAAGSANETPEIPD. The residue at position 2 (Ala-2) is an N-acetylalanine.

Belongs to the Tom6 family. As to quaternary structure, forms part of the preprotein translocase complex of the outer mitochondrial membrane (TOM complex) which consists of at least 7 different proteins (TOMM5, TOMM6, TOMM7, TOMM20, TOMM22, TOMM40 and TOMM70).

It localises to the mitochondrion outer membrane. The protein is Mitochondrial import receptor subunit TOM6 homolog (TOMM6) of Homo sapiens (Human).